We begin with the raw amino-acid sequence, 372 residues long: Fatty acid 2-hydroxylase (372 aa).

The Cytochrome b5 heme-binding domain maps to 8–86 (AASFTSAEVQ…LEQYYVGELR (79 aa)). 2 residues coordinate heme: H43 and H69. The next 2 membrane-spanning stretches (helical) occupy residues 168-188 (VWYS…WSYY) and 213-233 (SVFI…EYLI). A Fatty acid hydroxylase domain is found at 219–361 (FVLGMLIWTL…TKLWDYFFHT (143 aa)). Residues H234, H239, H257, H260, and H261 each contribute to the Zn(2+) site. 2 helical membrane-spanning segments follow: residues 268 to 288 (SRLV…YVFL) and 290 to 310 (LILP…GYVL). Zn(2+) contacts are provided by H315, H319, H336, H339, and H340.

It belongs to the sterol desaturase family. SCS7 subfamily. Requires Zn(2+) as cofactor. As to expression, detected in oligodendrocytes (at protein level). Detected in sciatic nerve.

Its subcellular location is the endoplasmic reticulum membrane. The protein resides in the microsome membrane. The catalysed reaction is a 1,2-saturated fatty acid + 2 Fe(II)-[cytochrome b5] + O2 + 2 H(+) = a (R)-2-hydroxy fatty acid + 2 Fe(III)-[cytochrome b5] + H2O. It catalyses the reaction hexadecanoate + 2 Fe(II)-[cytochrome b5] + O2 + 2 H(+) = (R)-2-hydroxyhexadecanoate + 2 Fe(III)-[cytochrome b5] + H2O. The enzyme catalyses octadecanoate + 2 Fe(II)-[cytochrome b5] + O2 + 2 H(+) = (R)-2-hydroxyoctadecanoate + 2 Fe(III)-[cytochrome b5] + H2O. It carries out the reaction docosanoate + 2 Fe(II)-[cytochrome b5] + O2 + 2 H(+) = 2-hydroxydocosanoate + 2 Fe(III)-[cytochrome b5] + H2O. The catalysed reaction is tetracosanoate + 2 Fe(II)-[cytochrome b5] + O2 + 2 H(+) = (R)-2-hydroxytetracosanoate + 2 Fe(III)-[cytochrome b5] + H2O. Its pathway is lipid metabolism; fatty acid metabolism. It functions in the pathway sphingolipid metabolism; galactosylceramide biosynthesis. In terms of biological role, catalyzes the hydroxylation of free fatty acids at the C-2 position to produce 2-hydroxy fatty acids, which are building blocks of sphingolipids and glycosphingolipids common in neural tissue and epidermis. FA2H is stereospecific for the production of (R)-2-hydroxy fatty acids. Plays an essential role in the synthesis of galactosphingolipids of the myelin sheath. Responsible for the synthesis of sphingolipids and glycosphingolipids involved in the formation of epidermal lamellar bodies critical for skin permeability barrier. Participates in the synthesis of glycosphingolipids and a fraction of type II wax diesters in sebaceous gland, specifically regulating hair follicle homeostasis. Involved in the synthesis of sphingolipids of plasma membrane rafts, controlling lipid raft mobility and trafficking of raft-associated proteins. The sequence is that of Fatty acid 2-hydroxylase from Rattus norvegicus (Rat).